Here is a 66-residue protein sequence, read N- to C-terminus: MPKLKTHRGAAKRFKVTGTGKIMRRRANKSHLLTGKPSKRTRHLRQIAQVDETQYKAIRMLIPYKF.

This sequence belongs to the bacterial ribosomal protein bL35 family.

The protein is Large ribosomal subunit protein bL35 of Thermodesulfovibrio yellowstonii (strain ATCC 51303 / DSM 11347 / YP87).